The sequence spans 436 residues: F-box/LRR-repeat protein 20 (436 aa).

The region spanning 22 to 68 is the F-box domain; it reads AVINKKLPKELLLRIFSFLDVVTLCRCAQVSRAWNVLALDGSNWQRI. LRR repeat units follow at residues 74–100, 101–126, 127–152, 153–178, 179–204, 205–230, 231–256, 257–282, 283–308, 309–334, 335–363, 364–388, and 389–414; these read QRDI…SLRG, CLGV…SLNG, CTKT…DLAS, CTSI…NISW, CDQV…FLKG, CTQL…NLQT, CLQI…CASG, CSNI…EVAR, CSQL…DLEE, CVQI…SLSH, CELI…ELDN, CPLI…ELYD, and CQQI…AYFA. T417 carries the post-translational modification Phosphothreonine. Residue S421 is modified to Phosphoserine.

Interacts with SKP1 and CUL1. Highly expressed in brain.

It localises to the cytoplasm. Substrate-recognition component of the SCF (SKP1-CUL1-F-box protein)-type E3 ubiquitin ligase complex. Isoform 3 regulates neural transmission by binding and ubiquitinating RIMS1, a modulator of presynaptic plasticity. The sequence is that of F-box/LRR-repeat protein 20 (Fbxl20) from Mus musculus (Mouse).